Reading from the N-terminus, the 151-residue chain is Glycine and methionine-rich protein (151 aa).

Positions 1–19 (MKTAVVLAAFSALMALARA) are cleaved as a signal peptide.

As to expression, component of the acid-insoluble and acid-soluble organic matrix of calcified layers of the shell (at protein level).

Its subcellular location is the secreted. The polypeptide is Glycine and methionine-rich protein (Lottia gigantea (Giant owl limpet)).